Consider the following 92-residue polypeptide: Small ribosomal subunit protein uS19 (92 aa).

The protein belongs to the universal ribosomal protein uS19 family.

Protein S19 forms a complex with S13 that binds strongly to the 16S ribosomal RNA. The chain is Small ribosomal subunit protein uS19 from Paramagnetospirillum magneticum (strain ATCC 700264 / AMB-1) (Magnetospirillum magneticum).